Consider the following 564-residue polypeptide: NAD-dependent malic enzyme (564 aa).

Catalysis depends on Tyr104, which acts as the Proton donor. Arg157 contacts NAD(+). Lys175 functions as the Proton acceptor in the catalytic mechanism. Residues Glu246, Asp247, and Asp270 each contribute to the a divalent metal cation site. Asp270 and Asn417 together coordinate NAD(+).

The protein belongs to the malic enzymes family. Homotetramer. Mg(2+) serves as cofactor. Mn(2+) is required as a cofactor.

The catalysed reaction is (S)-malate + NAD(+) = pyruvate + CO2 + NADH. It carries out the reaction oxaloacetate + H(+) = pyruvate + CO2. The protein is NAD-dependent malic enzyme of Aeromonas salmonicida (strain A449).